Consider the following 479-residue polypeptide: Anaerobic nitric oxide reductase flavorubredoxin (479 aa).

The interval 30–210 is zinc metallo-hydrolase; that stretch reads LRGSSYNSYL…PFSRLVTPKI (181 aa). Fe cation contacts are provided by His79, Glu81, Asp83, His147, Asp166, and His227. The 140-residue stretch at 254 to 393 folds into the Flavodoxin-like domain; the sequence is ITIFYDTMSN…LCREHGREIA (140 aa). FMN contacts are provided by residues 260 to 264 and 342 to 369; these read TMSNN and AFGS…EMSL. Residues 423-474 enclose the Rubredoxin-like domain; that stretch reads GPRMQCSVCQWIYDPAKGEPMQDVAPGTPWSEVPDNFLCPECSLGKDVFDEL. Positions 428, 431, 461, and 464 each coordinate Fe cation.

This sequence in the N-terminal section; belongs to the zinc metallo-hydrolase group 3 family. Homotetramer. Fe cation serves as cofactor. FMN is required as a cofactor.

It is found in the cytoplasm. It participates in nitrogen metabolism; nitric oxide reduction. Functionally, anaerobic nitric oxide reductase; uses NADH to detoxify nitric oxide (NO), protecting several 4Fe-4S NO-sensitive enzymes. Has at least 2 reductase partners, only one of which (NorW, flavorubredoxin reductase) has been identified. NO probably binds to the di-iron center; electrons enter from the NorW at rubredoxin and are transferred sequentially to the FMN center and the di-iron center. Also able to function as an aerobic oxygen reductase. The chain is Anaerobic nitric oxide reductase flavorubredoxin from Shigella flexneri serotype 5b (strain 8401).